We begin with the raw amino-acid sequence, 345 residues long: Olfactory receptor 11G2 (345 aa).

Residues 1–62 lie on the Extracellular side of the membrane; sequence MHFLSQNDLN…LGFPCPREGQ (62 aa). Asn-43 carries an N-linked (GlcNAc...) asparagine glycan. Residues 63-83 form a helical membrane-spanning segment; the sequence is ILLFVLFTVVYLLTLMGNGSI. At 84-92 the chain is on the cytoplasmic side; it reads ICAVHWDQR. The helical transmembrane segment at 93 to 113 threads the bilayer; the sequence is LHAPMYILLANFSFLEICYVT. At 114 to 135 the chain is on the extracellular side; the sequence is STVPSMLANFLSDTKIISFSGC. Cys-135 and Cys-217 form a disulfide bridge. The helical transmembrane segment at 136–156 threads the bilayer; the sequence is FLQFYFFFSLGSTECFFLAVM. Over 157 to 181 the chain is Cytoplasmic; the sequence is AFDRYLAICRPLRYPTIMTRRLCTN. The helical transmembrane segment at 182-202 threads the bilayer; that stretch reads LVVNCWVLGFIWFLIPIVNIS. The Extracellular segment spans residues 203–241; sequence QMSFCGSRIIDHFLCDPAPLLTLTCKKGPVIELVFSVLS. The chain crosses the membrane as a helical span at residues 242–264; the sequence is PLPVFMLFLFIVGSYALVVRAVL. The Cytoplasmic portion of the chain corresponds to 265–275; the sequence is RVPSAAGRRKA. The chain crosses the membrane as a helical span at residues 276–296; sequence FSTCGSHLAVVSLFYGSVLVM. Over 297–309 the chain is Extracellular; the sequence is YGSPPSKNEAGKQ. The helical transmembrane segment at 310 to 330 threads the bilayer; the sequence is KTVTLFYSVVTPLLNPVIYSL. The Cytoplasmic portion of the chain corresponds to 331–345; the sequence is RNKDMRKALKKFWGT.

The protein belongs to the G-protein coupled receptor 1 family.

The protein localises to the cell membrane. Odorant receptor. The chain is Olfactory receptor 11G2 (OR11G2) from Homo sapiens (Human).